The sequence spans 1594 residues: NAD-specific glutamate dehydrogenase (1594 aa).

The active site involves Lys816.

The protein belongs to the Glu/Leu/Phe/Val dehydrogenases family. Interacts with (unphosphorylated) GarA.

It carries out the reaction L-glutamate + NAD(+) + H2O = 2-oxoglutarate + NH4(+) + NADH + H(+). Activity is inhibited by unphosphorylated GarA. Stimulated by manganese and magnesium. In terms of biological role, catalyzes the reversible conversion of L-glutamate to 2-oxoglutarate. Highly specific for NAD. The polypeptide is NAD-specific glutamate dehydrogenase (gdh) (Mycolicibacterium smegmatis (strain ATCC 700084 / mc(2)155) (Mycobacterium smegmatis)).